The sequence spans 118 residues: Large ribosomal subunit protein uL18 (118 aa).

It belongs to the universal ribosomal protein uL18 family. As to quaternary structure, part of the 50S ribosomal subunit; part of the 5S rRNA/L5/L18/L25 subcomplex. Contacts the 5S and 23S rRNAs.

Its function is as follows. This is one of the proteins that bind and probably mediate the attachment of the 5S RNA into the large ribosomal subunit, where it forms part of the central protuberance. In Rickettsia prowazekii (strain Madrid E), this protein is Large ribosomal subunit protein uL18.